A 643-amino-acid chain; its full sequence is Mediator of RNA polymerase II transcription subunit 17 (643 aa).

A disordered region spans residues 53 to 82 (SDSEEDGAERARAGREQWKQEPEEDEGQLK). A compositionally biased stretch (basic and acidic residues) spans 60-73 (AERARAGREQWKQE).

It belongs to the Mediator complex subunit 17 family. Component of the Mediator complex.

It is found in the nucleus. Component of the Mediator complex, a coactivator involved in the regulated transcription of nearly all RNA polymerase II-dependent genes. Mediator functions as a bridge to convey information from gene-specific regulatory proteins to the basal RNA polymerase II transcription machinery. Mediator is recruited to promoters by direct interactions with regulatory proteins and serves as a scaffold for the assembly of a functional preinitiation complex with RNA polymerase II and the general transcription factors. The sequence is that of Mediator of RNA polymerase II transcription subunit 17 (med17) from Danio rerio (Zebrafish).